The primary structure comprises 412 residues: Serine hydroxymethyltransferase (412 aa).

Residues Leu-114 and 118 to 120 (GHL) contribute to the (6S)-5,6,7,8-tetrahydrofolate site. N6-(pyridoxal phosphate)lysine is present on Lys-223.

This sequence belongs to the SHMT family. Homodimer. Pyridoxal 5'-phosphate is required as a cofactor.

It is found in the cytoplasm. It catalyses the reaction (6R)-5,10-methylene-5,6,7,8-tetrahydrofolate + glycine + H2O = (6S)-5,6,7,8-tetrahydrofolate + L-serine. The protein operates within one-carbon metabolism; tetrahydrofolate interconversion. It functions in the pathway amino-acid biosynthesis; glycine biosynthesis; glycine from L-serine: step 1/1. Its function is as follows. Catalyzes the reversible interconversion of serine and glycine with tetrahydrofolate (THF) serving as the one-carbon carrier. This reaction serves as the major source of one-carbon groups required for the biosynthesis of purines, thymidylate, methionine, and other important biomolecules. Also exhibits THF-independent aldolase activity toward beta-hydroxyamino acids, producing glycine and aldehydes, via a retro-aldol mechanism. The polypeptide is Serine hydroxymethyltransferase (Mesoplasma florum (strain ATCC 33453 / NBRC 100688 / NCTC 11704 / L1) (Acholeplasma florum)).